The chain runs to 396 residues: Phosphoglycerate kinase (396 aa).

Substrate contacts are provided by residues 21-23 (DFN), arginine 36, 59-62 (HLGK), arginine 119, and arginine 156. Residues lysine 206, glycine 294, glutamate 325, and 352 to 355 (GGDS) contribute to the ATP site.

This sequence belongs to the phosphoglycerate kinase family. Monomer.

It is found in the cytoplasm. It carries out the reaction (2R)-3-phosphoglycerate + ATP = (2R)-3-phospho-glyceroyl phosphate + ADP. It functions in the pathway carbohydrate degradation; glycolysis; pyruvate from D-glyceraldehyde 3-phosphate: step 2/5. The sequence is that of Phosphoglycerate kinase from Listeria monocytogenes serotype 4b (strain CLIP80459).